The primary structure comprises 120 residues: Meiosis expressed gene 1 protein homolog (120 aa).

The interval 1–45 is disordered; that stretch reads MDGLAIGGVSAPMTAERPQQVKKQLSRRTPDAADGRKPTRMERAK. Basic and acidic residues predominate over residues 28–45; it reads RTPDAADGRKPTRMERAK.

The protein belongs to the MEIG1 family.

In Oxyrrhis marina (Dinoflagellate), this protein is Meiosis expressed gene 1 protein homolog.